A 2255-amino-acid chain; its full sequence is Defense against restriction protein B (2255 aa).

Positions 841 to 1126 (VRRLSEDGRG…YNMLSHVLPK (286 aa)) constitute a Helicase ATP-binding domain. 854-861 (FGTGLGKT) serves as a coordination point for ATP. The DEAH box signature appears at 1052–1055 (DEGH). Positions 1198 to 1234 (ELDEHQQDAPLTEEQLAAYEELRQQAEAAAKANNGVT) form a coiled coil. A Helicase C-terminal domain is found at 1383–1568 (KLKRIICNAL…EMENADANDM (186 aa)). Residues 1617–1654 (HAAGEDVEVLTAELERSKAELEKTTAEVAKFKQAVMAK) are a coiled coil.

The protein belongs to the helicase family.

Its subcellular location is the virion. In terms of biological role, capsid internal protein that is probably ejected along with the viral DNA and prevents degradation of viral DNA by the host EcoB and EcoK restriction-modification antiviral defense systems. The sequence is that of Defense against restriction protein B from Escherichia phage P1 (Bacteriophage P1).